The chain runs to 478 residues: MQIQNLIAALAGMAVVAEASVTFLDSPLSAALAKRQNKGGNNNNNNNNNNNNNNNNNKNNGGNNQLCLNPNNVQKGSQQAGTPKQGQANSAVDQANFINFCTGQQLTNGEQKTAGSCNGVVMGKIPSQNNMVSTIIKNPPPGGNLQANQQFNVQLKVNNLQAGSFTDAQSTYYSAPQDTNGAGNIIGHVHVTIQDMGNSLTPQNALDPKQFVFFKGIDDAGDGKGNLQATVTGGLPAGNYRVCTMSSASNHQPVLMPVAQRGAQDDCNKFTVGGNGGNGGNGGNGGNGGNGGNGGNGGNGGKNAAVNSGNADNGGNNDGGGGGNDGGNNSANNSGSGNKQGGKQQNGASTGGFPGTSNQFPGKTGTGSGAQTGNANTKTQAGGSASNSATNGNSGTGGKGGATANAIGGIQAPAVTNSGDSSRPFAVNGNTFVNKAAAVQRACDIQRNGCFDAINRGKLTGSTADCDAQLQTCTQQLS.

An N-terminal signal peptide occupies residues 1–19; sequence MQIQNLIAALAGMAVVAEA. Disordered regions lie at residues 35–89 and 299–400; these read RQNK…GQAN and NGGK…GGKG. A compositionally biased stretch (low complexity) spans 38–64; sequence KGGNNNNNNNNNNNNNNNNNKNNGGNN. The span at 65–89 shows a compositional bias: polar residues; sequence QLCLNPNNVQKGSQQAGTPKQGQAN. Residues 316–326 show a composition bias toward gly residues; that stretch reads NNDGGGGGNDG. 2 stretches are compositionally biased toward low complexity: residues 327-348 and 379-393; these read GNNS…QNGA and TQAG…TNGN. N-linked (GlcNAc...) asparagine glycans are attached at residues Asn-328 and Asn-332.

Its subcellular location is the secreted. Functionally, secreted protein required for appressorial penetration of intact host epidermal cells and for pathogenicit, but not for subsequent biotrophic and necrotrophic colonization of leaves. This is Pathogenicity cluster 5 protein d from Colletotrichum graminicola (strain M1.001 / M2 / FGSC 10212) (Maize anthracnose fungus).